Here is a 183-residue protein sequence, read N- to C-terminus: Translation initiation factor IF-3 (183 aa).

Belongs to the IF-3 family. As to quaternary structure, monomer.

The protein localises to the cytoplasm. Its function is as follows. IF-3 binds to the 30S ribosomal subunit and shifts the equilibrium between 70S ribosomes and their 50S and 30S subunits in favor of the free subunits, thus enhancing the availability of 30S subunits on which protein synthesis initiation begins. In Pseudomonas putida (strain W619), this protein is Translation initiation factor IF-3.